Reading from the N-terminus, the 816-residue chain is Phosphatidylinositol 4-kinase beta (816 aa).

Disordered regions lie at residues 1–30, 101–120, and 248–318; these read MGDT…GSLL, EDEM…RRRR, and AHRK…SFSS. Position 2 is an N-acetylglycine (Gly-2). The interaction with ACBD3 stretch occupies residues 2 to 68; sequence GDTVVEPAPL…VKLLHGGMAV (67 aa). Residues 52–242 enclose the PIK helical domain; sequence CQDVLEKVKL…GTKLRKLILS (191 aa). Phosphoserine is present on Ser-258. Thr-263 is subject to Phosphothreonine. Phosphoserine is present on residues Ser-266, Ser-275, Ser-277, Ser-284, and Ser-294. 2 stretches are compositionally biased toward polar residues: residues 278–297 and 306–318; these read DATA…SNPK and SSST…SFSS. Residue Ser-428 is modified to Phosphoserine. Phosphothreonine is present on Thr-438. Ser-511 is subject to Phosphoserine. Residues Thr-517 and Thr-519 each carry the phosphothreonine modification. One can recognise a PI3K/PI4K catalytic domain in the interval 535–801; the sequence is EPWQEKVRRI…MVDGSMRSIT (267 aa). Residues 541 to 547 are G-loop; the sequence is VRRIREG. Positions 668-676 are catalytic loop; that stretch reads QVKDRHNGN. Positions 687-711 are activation loop; it reads HIDFGFILSSSPRNLGFETSAFKLT.

The protein belongs to the PI3/PI4-kinase family. Type III PI4K subfamily. In terms of assembly, interacts with ARF1 and ARF3 in the Golgi complex, but not with ARF4, ARF5 or ARF6. Interacts with NCS1/FREQ in a calcium-independent manner. Interacts with CALN1/CABP8 and CALN2/CABP7; in a calcium-dependent manner; this interaction competes with NCS1/FREQ binding. Interacts with ACBD3. Interacts with ARMH3, YWHAB, YWHAE, YWHAG, YWHAH, YWHAQ, YWHAZ and SFN. Interacts with GGA2 (via VHS domain); the interaction is important for PI4KB location at the Golgi apparatus membrane. Interacts with ATG9A. Mg(2+) is required as a cofactor. It depends on Mn(2+) as a cofactor.

The protein localises to the endomembrane system. Its subcellular location is the mitochondrion outer membrane. It is found in the rough endoplasmic reticulum membrane. It localises to the golgi apparatus. The protein resides in the golgi apparatus membrane. It catalyses the reaction a 1,2-diacyl-sn-glycero-3-phospho-(1D-myo-inositol) + ATP = a 1,2-diacyl-sn-glycero-3-phospho-(1D-myo-inositol 4-phosphate) + ADP + H(+). Its activity is regulated as follows. Inhibited by wortmannin. Increased kinase activity upon interaction with NCS1/FREQ. Functionally, phosphorylates phosphatidylinositol (PI) in the first committed step in the production of the second messenger inositol-1,4,5,-trisphosphate (PIP). May regulate Golgi disintegration/reorganization during mitosis, possibly via its phosphorylation. Involved in Golgi-to-plasma membrane trafficking. This Plecturocebus moloch (Dusky titi monkey) protein is Phosphatidylinositol 4-kinase beta (PI4KB).